Here is a 311-residue protein sequence, read N- to C-terminus: Pyrimidine-specific ribonucleoside hydrolase RihA (311 aa).

His-240 is an active-site residue.

The protein belongs to the IUNH family. RihA subfamily.

Its function is as follows. Hydrolyzes cytidine or uridine to ribose and cytosine or uracil, respectively. This is Pyrimidine-specific ribonucleoside hydrolase RihA from Klebsiella pneumoniae (strain 342).